The sequence spans 828 residues: Periplasmic nitrate reductase (828 aa).

The tat-type signal signal peptide spans 1–31; it reads MKLSRRSFMKANAVAAAAAAAGLSVPGVARA. Residues 39–95 enclose the 4Fe-4S Mo/W bis-MGD-type domain; it reads IKWDKAPCRFCGTGCGVLVGTQQGRVVACQGDPDAPVNRGLNCIKGYFLPKIMYGKD. The [4Fe-4S] cluster site is built by cysteine 46, cysteine 49, cysteine 53, and cysteine 81. Residues lysine 83, glutamine 150, asparagine 175, cysteine 179, 212–219, 243–247, 262–264, methionine 372, glutamine 376, asparagine 482, 508–509, lysine 531, aspartate 558, and 718–727 each bind Mo-bis(molybdopterin guanine dinucleotide); these read WGSNMAEM, STFQH, QSD, SD, and TGRVLEHWHT. Phenylalanine 794 is a substrate binding site. Positions 802 and 819 each coordinate Mo-bis(molybdopterin guanine dinucleotide).

The protein belongs to the prokaryotic molybdopterin-containing oxidoreductase family. NasA/NapA/NarB subfamily. Component of the periplasmic nitrate reductase NapAB complex composed of NapA and NapB. Requires [4Fe-4S] cluster as cofactor. The cofactor is Mo-bis(molybdopterin guanine dinucleotide). Post-translationally, predicted to be exported by the Tat system. The position of the signal peptide cleavage has not been experimentally proven.

The protein resides in the periplasm. It catalyses the reaction 2 Fe(II)-[cytochrome] + nitrate + 2 H(+) = 2 Fe(III)-[cytochrome] + nitrite + H2O. Catalytic subunit of the periplasmic nitrate reductase complex NapAB. Receives electrons from NapB and catalyzes the reduction of nitrate to nitrite. The protein is Periplasmic nitrate reductase of Salmonella dublin (strain CT_02021853).